Reading from the N-terminus, the 254-residue chain is Alcohol dehydrogenase 1 (254 aa).

Position 10 to 33 (10 to 33) interacts with NAD(+); the sequence is FVAGLGGIGFDTSREIVKSGPKNL. Substrate is bound at residue serine 138. Tyrosine 151 acts as the Proton acceptor in catalysis.

Belongs to the short-chain dehydrogenases/reductases (SDR) family. Homodimer.

The catalysed reaction is a primary alcohol + NAD(+) = an aldehyde + NADH + H(+). It catalyses the reaction a secondary alcohol + NAD(+) = a ketone + NADH + H(+). This is Alcohol dehydrogenase 1 (Adh1) from Drosophila navojoa (Fruit fly).